Consider the following 1223-residue polypeptide: Glycerophosphocholine phosphodiesterase GDE1 (1223 aa).

Residues 1-213 (MKFGKTFANH…GTNQQMSTMK (213 aa)) enclose the SPX domain. The span at 43–59 (HNKNSYDEGRPPTKMRD) shows a compositional bias: basic and acidic residues. The disordered stretch occupies residues 43-64 (HNKNSYDEGRPPTKMRDSSNSA). ANK repeat units lie at residues 427–456 (YKRT…EWNI), 472–502 (ESLT…NVKL), 504–533 (SSSL…DINY), 538–567 (LHET…DLEI), 572–601 (FGWT…NFDI), and 605–634 (GGWT…LVTH). Position 653 is a phosphoserine (Ser-653). Residues 872-1217 (TRVIGHRGLG…DSVLAIRRGL (346 aa)) form the GP-PDE domain. Positions 911, 913, and 926 each coordinate a divalent metal cation. Phosphoserine is present on Ser-983.

Belongs to the GDE1 family. A divalent metal cation is required as a cofactor.

Its subcellular location is the cytoplasm. It carries out the reaction sn-glycerol 3-phosphocholine + H2O = sn-glycerol 3-phosphate + choline + H(+). It catalyses the reaction sn-glycero-3-phospho-1D-myo-inositol + H2O = myo-inositol + sn-glycerol 3-phosphate + H(+). In terms of biological role, glycerophosphocholine glycerophosphodiesterase responsible for the hydrolysis of intracellular glycerophosphocholine into glycerol-phosphate and choline. The choline is used for phosphatidyl-choline synthesis. Required for utilization of glycerophosphocholine as phosphate source. May also use glycerophosphoinositol as substrate in vivo. This Saccharomyces cerevisiae (strain ATCC 204508 / S288c) (Baker's yeast) protein is Glycerophosphocholine phosphodiesterase GDE1.